Reading from the N-terminus, the 313-residue chain is 2-dehydro-3-deoxygluconokinase/2-dehydro-3-deoxygalactonokinase (313 aa).

Residues glycine 34 to asparagine 38, tyrosine 90, tyrosine 106 to arginine 108, and arginine 166 each bind substrate. Residues asparagine 164–arginine 166, lysine 226–glycine 231, and glycine 255–aspartate 258 each bind ATP. Positions 258 and 294 each coordinate substrate. Aspartate 258 acts as the Proton acceptor in catalysis.

As to quaternary structure, homohexamer; trimer of dimers.

It carries out the reaction 2-dehydro-3-deoxy-D-gluconate + ATP = 2-dehydro-3-deoxy-6-phospho-D-gluconate + ADP + H(+). The enzyme catalyses 2-dehydro-3-deoxy-D-galactonate + ATP = 2-dehydro-3-deoxy-6-phospho-D-galactonate + ADP + H(+). It functions in the pathway carbohydrate acid metabolism; 2-dehydro-3-deoxy-D-gluconate degradation; D-glyceraldehyde 3-phosphate and pyruvate from 2-dehydro-3-deoxy-D-gluconate: step 1/2. In terms of biological role, involved in the degradation of glucose and galactose via the semi-phosphorylative Entner-Doudoroff pathway. Catalyzes the phosphorylation of 2-keto-3-deoxygluconate (KDG) and 2-keto-3-deoxygalactonate (KDGal) to produce 2-keto-3-deoxy-6-phosphogluconate (KDPG) and 2-keto-3-deoxy-6-phosphogalactonate (KDPGal), respectively. This is 2-dehydro-3-deoxygluconokinase/2-dehydro-3-deoxygalactonokinase (kdgK) from Saccharolobus solfataricus (strain ATCC 35092 / DSM 1617 / JCM 11322 / P2) (Sulfolobus solfataricus).